Here is a 273-residue protein sequence, read N- to C-terminus: Eukaryotic translation initiation factor 3 subunit G-2 (273 aa).

Residues 168–192 (PPFMKDGGGGSGGKNWGRGRDRDDS) form a disordered region. Positions 173-183 (DGGGGSGGKNW) are enriched in gly residues. Residues 193–271 (SAVRISNLSE…LILCVEWSKP (79 aa)) form the RRM domain.

This sequence belongs to the eIF-3 subunit G family. As to quaternary structure, component of the eukaryotic translation initiation factor 3 (eIF-3) complex. The eIF-3 complex interacts with pix.

It localises to the cytoplasm. RNA-binding component of the eukaryotic translation initiation factor 3 (eIF-3) complex, which is involved in protein synthesis of a specialized repertoire of mRNAs and, together with other initiation factors, stimulates binding of mRNA and methionyl-tRNAi to the 40S ribosome. The eIF-3 complex specifically targets and initiates translation of a subset of mRNAs involved in cell proliferation. This subunit can bind 18S rRNA. This chain is Eukaryotic translation initiation factor 3 subunit G-2, found in Drosophila erecta (Fruit fly).